The primary structure comprises 338 residues: Nucleoid-associated protein PM1885 (338 aa).

This sequence belongs to the YejK family.

Its subcellular location is the cytoplasm. It is found in the nucleoid. This chain is Nucleoid-associated protein PM1885, found in Pasteurella multocida (strain Pm70).